A 562-amino-acid polypeptide reads, in one-letter code: MVLDKMIIFHLLLWLCNVVVHAAKVEILPAPQSVTWENDTAIIINPRLLQANTSCPLLEDAFVRTVSAIEKSKWHPFPIDDFNTANGKNIKTSLVHIQVDDATVDLQLGVNESYTLKINTDGINIHAATTWGALHGLVSLQQLIIHTSEDKYVVPSSVTISDFPNFKHRGLMIDSGRNFLTVDSILEQIDIMALSKMNSLHWHLADSQSWPVALESYPHMIKDAYSNDEVYSKNDLKYIVDYARARGVRVIPEIDMPGHARAGWKQVDPTIVECADAFWTDAAVEPPPGQLNIESEKTYEVISNVYNELSDIFIDDVFHVGNDELQEKCYSAQLSPNNTVTDLLKRYLKKALPIFNKVNHRKLTMWDDVLLSDVSADKIPSNITLQVWHEISGVKNLTSRGYDVVVSSSDFLYLDCGNAGWVTNDPRYVETPENVDFNTGQGGSWCGPYKSYQRIYNFDFTANLTETEKNHVLGREAALWSEQVDSTVLTTKIWPRTAALAELTWSGNKDSNGHHRGYEFTQRILNFREYLVKLGYGVSPLVPKYCLLNPHACDLYKNPPVY.

The signal sequence occupies residues 1–22; the sequence is MVLDKMIIFHLLLWLCNVVVHA. Residues Asn38, Asn52, Asn111, Asn337, Asn382, Asn396, and Asn463 are each glycosylated (N-linked (GlcNAc...) asparagine).

Belongs to the glycosyl hydrolase 20 family.

The catalysed reaction is Hydrolysis of terminal non-reducing N-acetyl-D-hexosamine residues in N-acetyl-beta-D-hexosaminides.. Its function is as follows. Has a broad substrate specificity. The polypeptide is Beta-hexosaminidase (HEX1) (Candida albicans (Yeast)).